Here is a 556-residue protein sequence, read N- to C-terminus: Arginine--tRNA ligase (556 aa).

The 'HIGH' region motif lies at 134–144; that stretch reads ANPTGPLHIGH.

It belongs to the class-I aminoacyl-tRNA synthetase family. In terms of assembly, monomer.

Its subcellular location is the cytoplasm. The enzyme catalyses tRNA(Arg) + L-arginine + ATP = L-arginyl-tRNA(Arg) + AMP + diphosphate. This Micrococcus luteus (strain ATCC 4698 / DSM 20030 / JCM 1464 / CCM 169 / CCUG 5858 / IAM 1056 / NBRC 3333 / NCIMB 9278 / NCTC 2665 / VKM Ac-2230) (Micrococcus lysodeikticus) protein is Arginine--tRNA ligase.